The primary structure comprises 367 residues: HTH-type transcriptional regulator GbdR (367 aa).

Residues 227 to 325 (QEIVALMEAN…GIPPRDERQG (99 aa)) form the HTH araC/xylS-type domain. 2 DNA-binding regions (H-T-H motif) span residues 244–265 (DELA…QKYL) and 292–315 (IIEV…REYF).

In terms of biological role, specific regulator of choline metabolism, which activates transcription of at least 25 genes from 11 promoters in response to choline metabolites. Required for the induction of plcH, encoding the phospholipase C, and pchP, encoding the phosphorylcholine phosphatase, in response to glycine betaine (GB) and dimethylglycine (DMG). Also controls the expression of gbcAB and dgcAB, which are required for GB and DMG degradation, respectively, in response to both GB and DMG. The GbdR regulon also includes genes encoding sarcosine, glycine and serine catabolic enzymes, the BetX and CbcXWV quaternary amine transport proteins and the acetylcholine esterase gene, choE. Acts by binding directly to the promoter region of the genes. May play an important role during P.aeruginosa interactions with eukaryotes. This is HTH-type transcriptional regulator GbdR from Pseudomonas aeruginosa (strain UCBPP-PA14).